We begin with the raw amino-acid sequence, 351 residues long: Methionine import ATP-binding protein MetN (351 aa).

Positions 2–238 constitute an ABC transporter domain; sequence IKLNHINKTY…PKHPITRELI (237 aa). ATP is bound at residue 35–42; that stretch reads GYSGAGKS.

This sequence belongs to the ABC transporter superfamily. Methionine importer (TC 3.A.1.24) family. The complex is composed of two ATP-binding proteins (MetN), two transmembrane proteins (MetI) and a solute-binding protein (MetQ).

Its subcellular location is the cell inner membrane. The enzyme catalyses L-methionine(out) + ATP + H2O = L-methionine(in) + ADP + phosphate + H(+). The catalysed reaction is D-methionine(out) + ATP + H2O = D-methionine(in) + ADP + phosphate + H(+). Functionally, part of the ABC transporter complex MetNIQ involved in methionine import. Responsible for energy coupling to the transport system. The sequence is that of Methionine import ATP-binding protein MetN from Helicobacter hepaticus (strain ATCC 51449 / 3B1).